The primary structure comprises 1232 residues: MRSKGRARKLATSNECAYGNYPEIPLEEMPDADADGITSVPSLHIQEPCSPATSSESFTPKEGSPYKAPIYIPDDIPIPDEFELRESTMPGAGLGIWTKRKIEIGEKFGPYMGEQRSDLKDSSYGWEILDEFCNVKFCIDASQPDVGSWLKYIRFAGCYDQHNLVACQINDQIFYRVVADIAPGEELLLFMKSEEDPHEPMAPDIHEERQHRCEDCDQLFESKAELADHQKFPCSTPHSAFSMVEEDLQQNLESESDLREIHGNQDCKECDRVFPDLQSLEKHMLSHTEEREYKCDQCPKAFNWKSNLIRHQMSHDSGKHYECENCAKVFTDPSNLQRHIRSQHVGARAHACPECGKTFATSSGLKQHKHIHSSVKPFICEVCHKSYTQFSNLCRHKRMHADCRTQIKCKDCGQMFSTTSSLNKHRRFCEGKNHFAAGGFFGQGISLPGTPAMDKTSMVNMSHANPGLADYFGTNRHPAGLTFPTAPGFSFSFPGLFPSGLYHRPPLIPASPPVKGLSSTEQSNKCQSPLLTHPQILPATQDILKALSKHPPVGDNKPVELLPERSSEERPLEKISDQSESSDLDDVSTPSGSDLETTSGSDLESDLESDKEKCKENGKMFKDKVSPLQNLASITNKKEHNNHSVFSASVEEQSAVSGAVNDSIKAIASIAEKYFGSTGLVGLQDKKVGALPYPSMFPLPFFPAFSQSMYPFPDRDLRSLPLKMEPQSPSEVKKLQKGSSESPFDLTTKRKDEKPLTSGPSKPSGTPATSQDQPLDLSMGSRGRASGTKLTEPRKNHVFGEKKGSNMDTRPSSDGSLQHARPTPFFMDPIYRVEKRKLTDPLEALKEKYLRPSPGFLFHPQMSAIENMAEKLESFSALKPEASELLQSVPSMFSFRAPPNTLPENLLRKGKERYTCRYCGKIFPRSANLTRHLRTHTGEQPYRCKYCDRSFSISSNLQRHVRNIHNKEKPFKCHLCDRCFGQQTNLDRHLKKHENGNMSGTATSSPHSELESAGAILDDKEDAYFTEIRNFIGNSNHGSQSPRNMEERMNGSHFKDKKALATSQNSDLLDDEEVEDEVLLDEEDEDNDIPGKPRKELGVTRLDEEIPEDDYEEAGALEMSCKASPVRYKEEDYKSGLSALDHIRHFTDSLKMREMEENQYTDAELSSISSSHVPEELKQTLHRKSKSQAYAMMLSLSDKDSLHPTSHSSSNVWHSMARAAAESSAIQSISHV.

Residues 22–68 (PEIPLEEMPDADADGITSVPSLHIQEPCSPATSSESFTPKEGSPYKA) form a disordered region. Over residues 25–34 (PLEEMPDADA) the composition is skewed to acidic residues. The region spanning 80–192 (DEFELRESTM…PGEELLLFMK (113 aa)) is the SET domain. Residues lysine 101 and lysine 192 each participate in a glycyl lysine isopeptide (Lys-Gly) (interchain with G-Cter in SUMO2) cross-link. The interaction with SUV39H1 and probably MAPK9 and SMAD3 stretch occupies residues 191-442 (MKSEEDPHEP…NHFAAGGFFG (252 aa)). C2H2-type zinc fingers lie at residues 211-238 (HRCE…STPH), 265-287 (QDCK…MLSH), 293-315 (YKCD…QMSH), 321-344 (YECE…RSQH), and 350-372 (HACP…KHIH). A Glycyl lysine isopeptide (Lys-Gly) (interchain with G-Cter in SUMO2) cross-link involves residue lysine 294. Residues lysine 369 and lysine 376 each participate in a glycyl lysine isopeptide (Lys-Gly) (interchain with G-Cter in SUMO2) cross-link. The C2H2-type 6 zinc finger occupies 378-400 (FICEVCHKSYTQFSNLCRHKRMH). The C2H2-type 7; atypical zinc-finger motif lies at 407 to 429 (IKCKDCGQMFSTTSSLNKHRRFC). Residues lysine 432, lysine 525, lysine 545, lysine 549, and lysine 557 each participate in a glycyl lysine isopeptide (Lys-Gly) (interchain with G-Cter in SUMO2) cross-link. Positions 548 to 622 (SKHPPVGDNK…KCKENGKMFK (75 aa)) are disordered. Over residues 562-577 (LPERSSEERPLEKISD) the composition is skewed to basic and acidic residues. Residues 588 to 600 (STPSGSDLETTSG) show a composition bias toward polar residues. The span at 608-622 (ESDKEKCKENGKMFK) shows a compositional bias: basic and acidic residues. The Nuclear localization signal signature appears at 611–624 (KEKCKENGKMFKDK). Residue lysine 624 forms a Glycyl lysine isopeptide (Lys-Gly) (interchain with G-Cter in SUMO2) linkage. A Phosphoserine modification is found at serine 626. Glycyl lysine isopeptide (Lys-Gly) (interchain with G-Cter in SUMO2) cross-links involve residues lysine 637, lysine 665, lysine 687, and lysine 723. The segment at 720-823 (LPLKMEPQSP…DGSLQHARPT (104 aa)) is disordered. Phosphoserine is present on serine 728. Residues lysine 733, lysine 734, and lysine 737 each participate in a glycyl lysine isopeptide (Lys-Gly) (interchain with G-Cter in SUMO2) cross-link. Serine 742 carries the phosphoserine modification. Residues 743-747 (PFDLT) carry the CTBP-binding motif 1 motif. Glycyl lysine isopeptide (Lys-Gly) (interchain with G-Cter in SUMO2) cross-links involve residues lysine 751, lysine 754, and lysine 762. Polar residues predominate over residues 758–773 (SGPSKPSGTPATSQDQ). A CTBP-binding motif 2 motif is present at residues 774 to 778 (PLDLS). Glycyl lysine isopeptide (Lys-Gly) (interchain with G-Cter in SUMO2) cross-links involve residues lysine 789, lysine 802, and lysine 803. The span at 791–805 (TEPRKNHVFGEKKGS) shows a compositional bias: basic and acidic residues. Over residues 806 to 816 (NMDTRPSSDGS) the composition is skewed to polar residues. Glycyl lysine isopeptide (Lys-Gly) (interchain with G-Cter in SUMO2) cross-links involve residues lysine 837, lysine 846, lysine 848, and lysine 879. C2H2-type zinc fingers lie at residues 914–936 (YTCR…LRTH), 942–965 (YRCK…RNIH), and 971–993 (FKCH…LKKH). Lysine 1020 is covalently cross-linked (Glycyl lysine isopeptide (Lys-Gly) (interchain with G-Cter in SUMO2)). The span at 1032–1043 (IGNSNHGSQSPR) shows a compositional bias: polar residues. Positions 1032–1107 (IGNSNHGSQS…GVTRLDEEIP (76 aa)) are disordered. Phosphoserine occurs at positions 1039 and 1041. A compositionally biased stretch (basic and acidic residues) spans 1044–1059 (NMEERMNGSHFKDKKA). Glycyl lysine isopeptide (Lys-Gly) (interchain with G-Cter in SUMO2) cross-links involve residues lysine 1055 and lysine 1058. Positions 1068–1088 (LLDDEEVEDEVLLDEEDEDND) are enriched in acidic residues. A compositionally biased stretch (basic and acidic residues) spans 1089 to 1104 (IPGKPRKELGVTRLDE). Residues lysine 1122, lysine 1129, lysine 1134, lysine 1151, lysine 1178, and lysine 1186 each participate in a glycyl lysine isopeptide (Lys-Gly) (interchain with G-Cter in SUMO2) cross-link.

As to quaternary structure, homooligomer. Interacts with CTBP1. Interacts with SMAD3 (via MH2 domain); the interaction is direct. Interacts with SMAD4; through interaction with SMAD3. Interacts with CREBBP, KAT2B and histone deacetylases. Interacts with MAPK8 and MAPK9; inhibits JNK signaling. Interacts with SUV39H1 (via SET domain); enhances MECOM transcriptional repression activity. In terms of processing, may be acetylated by CREBBP and KAT2B.

The protein localises to the nucleus. It localises to the nucleus speckle. Its subcellular location is the cytoplasm. The catalysed reaction is L-lysyl(9)-[histone H3] + S-adenosyl-L-methionine = N(6)-methyl-L-lysyl(9)-[histone H3] + S-adenosyl-L-homocysteine + H(+). In terms of biological role, functions as a transcriptional regulator binding to DNA sequences in the promoter region of target genes and regulating positively or negatively their expression. Oncogene which plays a role in development, cell proliferation and differentiation. May also play a role in apoptosis through regulation of the JNK and TGF-beta signaling. Involved in hematopoiesis. Its function is as follows. Displays histone methyltransferase activity and monomethylates 'Lys-9' of histone H3 (H3K9me1) in vitro. Probably catalyzes the monomethylation of free histone H3 in the cytoplasm which is then transported to the nucleus and incorporated into nucleosomes where SUV39H methyltransferases use it as a substrate to catalyze histone H3 'Lys-9' trimethylation. Likely to be one of the primary histone methyltransferases along with PRDM16 that direct cytoplasmic H3K9me1 methylation. The sequence is that of Histone-lysine N-methyltransferase MECOM from Mus musculus (Mouse).